The primary structure comprises 1292 residues: Zinc finger protein 423 (1292 aa).

Residues 1 to 11 are compositionally biased toward basic residues; it reads MSRRKQAKPRS. Disordered stretches follow at residues 1–21, 33–70, and 95–125; these read MSRRKQAKPRSVKVEEGEASD, AGGLEGEPECDRKTSRALEDRNSVTSQEERNEDDEDVE, and AHRCPGDGDDDPQLSWVASSPSSKDVASPTQ. Residues 41 to 54 show a composition bias toward basic and acidic residues; sequence ECDRKTSRALEDRN. A phosphoserine mark is found at Ser55 and Ser58. Residues 75-101 form a C2H2-type 1; degenerate zinc finger; it reads YTCDHCQQDFESLADLTDHRAHRCPGD. Residues 110–125 show a composition bias toward polar residues; sequence WVASSPSSKDVASPTQ. 7 consecutive C2H2-type zinc fingers follow at residues 146–168, 174–196, 202–224, 230–252, 271–294, 303–326, and 331–353; these read YPCQFCDKSFIRLSYLKRHEQIH, FKCTFCSRLFKHKRSRDRHIKLH, YHCHECEAAFSRSDHLKIHLKTH, FKCSVCKRGFSSTSSLQSHMQAH, FMCDYCEDTFSQTEELEKHVLTLH, LQCIHCPEVFVDESTLLAHIHQAH, and HKCPMCPEQFSSVEGVYCHLDSH. The tract at residues 354–407 is disordered; that stretch reads RQPDSSNHSVSPDPVLGSVASMSSATPDSSASVERGSTPDSTLKPLRGQKKMRD. Residues 371-385 show a composition bias toward low complexity; sequence SVASMSSATPDSSAS. Residues 417–441 form a C2H2-type 9; degenerate zinc finger; it reads YSCPYCSKRDFTSLAVLEIHLKTIH. 3 C2H2-type zinc fingers span residues 449-472, 488-511, and 525-548; these read HTCQICLDSMPTLYNLNEHVRKLH, FHCNYCPEMFADINSLQEHIRVSH, and FFCNQCSMGFLTESSLTEHIQQAH. The segment at 571–596 adopts a C2H2-type 13; atypical zinc-finger fold; it reads YSCPYCTNSPIFGSILKLTKHIKENH. The tract at residues 598–635 is disordered; the sequence is NIPLAHSKKSKAEQSPVSSDVEVSSPKRQRLSGSANSI. Ser612 carries the phosphoserine modification. Low complexity predominate over residues 612–623; sequence SPVSSDVEVSSP. 7 C2H2-type zinc fingers span residues 640 to 662, 670 to 692, 700 to 723, 728 to 751, 758 to 781, 789 to 811, and 815 to 838; these read YPCNQCDLKFSNFESFQTHLKLH, QACPQCKEDFDSQESLLQHLTVH, YVCESCDKQFSSVDDLQKHLLDMH, YHCTLCQEVFDSKVSIQVHLAVKH, YRCTACNWDFRKEADLQVHVKHSH, HKCIFCGETFSTEVELQCHITTH, and YNCRFCSKAFHAVILLEKHLREKH. Residues 894-916 form a C2H2-type 21; degenerate zinc finger; it reads YGCDICGAAYTMEVLLQNHRLRD. 3 C2H2-type zinc fingers span residues 938-960, 967-989, and 1028-1050; these read HKCNVCSRTFFSENGLREHLQTH, YMCPICGERFPSLLTLTEHKVTH, and FRCVVCMQTVTSTLELKIHGTFH. Ser1062 carries the phosphoserine modification. The C2H2-type 25; degenerate zinc finger occupies 1072–1090; the sequence is YKCALCLKEFRSKQDLVRL. 5 C2H2-type zinc fingers span residues 1128 to 1151, 1176 to 1198, 1206 to 1228, 1237 to 1260, and 1267 to 1290; these read LRCPECNVKFESAEDLESHMQVDH, YQCIKCQMTFENEREIQIHVANH, HECKLCNQMFDSPAKLLCHLIEH, FKCPVCFTVFVQANKLQQHIFAVH, and YDCSQCPQKFFFQTELQNHTMSQH. A compositionally biased stretch (basic and acidic residues) spans 1144 to 1155; it reads ESHMQVDHRDLT. The tract at residues 1144-1171 is disordered; the sequence is ESHMQVDHRDLTPETSGPRKGAQTSPVP.

It belongs to the krueppel C2H2-type zinc-finger protein family. As to quaternary structure, homodimer. Interacts with SMAD1 and SMAD4. Interacts with EBF1. Interacts with PARP1. Interacts with CEP290. Within the cerebellum, Zfp423 is expressed in both ventricular and external germinal zones. Transiently expressed in newly differentiating olfactory-receptor neurons.

It is found in the nucleus. Its function is as follows. Transcription factor that can both act as an activator or a repressor depending on the context. Plays a central role in BMP signaling and olfactory neurogenesis. Associates with SMADs in response to BMP2 leading to activate transcription of BMP target genes. Acts as a transcriptional repressor via its interaction with EBF1, a transcription factor involved in terminal olfactory receptor neurons differentiation; this interaction preventing EBF1 to bind DNA and activate olfactory-specific genes. Involved in olfactory neurogenesis by participating in a developmental switch that regulates the transition from differentiation to maturation in olfactory receptor neurons. Controls proliferation and differentiation of neural precursors in cerebellar vermis formation. The polypeptide is Zinc finger protein 423 (Znf423) (Mus musculus (Mouse)).